The sequence spans 311 residues: Salutaridine reductase (311 aa).

An NADP(+)-binding site is contributed by 17–40; it reads VTGGNKGIGFEICKQLSSSGIMVV. Residue serine 180 participates in substrate binding. The active-site Proton acceptor is the tyrosine 236.

It belongs to the short-chain dehydrogenases/reductases (SDR) family.

The catalysed reaction is (7S)-salutaridinol + NADP(+) = salutaridine + NADPH + H(+). Subject to substrate inhibition at salutaridine concentrations higher than 20 to 30 uM. Its function is as follows. Involved in biosynthesis of morphinan-type benzylisoquinoline alkaloids. Catalyzes the stereospecific conversion of salutaridine to salutaridinol. The protein is Salutaridine reductase of Papaver bracteatum (Great scarlet poppy).